The following is a 799-amino-acid chain: E3 UFM1-protein ligase 1 homolog (799 aa).

The segment at 429–483 (TTTTTTTQPSKKKDNLINSDDDDNQDNNKKSSKGKNKKSKQQQSSIQKLINDSED) is disordered. Basic residues predominate over residues 458–468 (KSSKGKNKKSK). Over residues 469 to 478 (QQQSSIQKLI) the composition is skewed to low complexity.

Belongs to the UFL1 family.

In terms of biological role, E3 UFM1-protein ligase that mediates ufmylation of target proteins. This chain is E3 UFM1-protein ligase 1 homolog, found in Dictyostelium discoideum (Social amoeba).